The chain runs to 486 residues: Protein DETOXIFICATION 53 (486 aa).

A run of 12 helical transmembrane segments spans residues 15 to 35 (CPIV…MWFL), 45 to 65 (GGAL…KGLS), 94 to 114 (LLIV…PIFL), 130 to 150 (MLFF…RTFL), 159 to 179 (LTIS…VFVV), 187 to 207 (GVAI…LVYT), 240 to 260 (AISV…CGLL), 267 to 287 (VAAM…PFAI), 312 to 332 (VIGL…VTAL), 346 to 366 (ILGL…GNSP), 386 to 406 (VNLC…TFGF), and 413 to 433 (LWFG…YTLI). The tract at residues 448–474 (TSAAADKSHSEDETVHAEVQDDDDVSS) is disordered. Positions 453 to 466 (DKSHSEDETVHAEV) are enriched in basic and acidic residues.

The protein belongs to the multi antimicrobial extrusion (MATE) (TC 2.A.66.1) family.

The protein localises to the membrane. This is Protein DETOXIFICATION 53 from Arabidopsis thaliana (Mouse-ear cress).